Reading from the N-terminus, the 404-residue chain is Imidazolonepropionase (404 aa).

The Fe(3+) site is built by histidine 70 and histidine 72. Residues histidine 70 and histidine 72 each coordinate Zn(2+). Arginine 79, tyrosine 142, and histidine 174 together coordinate 4-imidazolone-5-propanoate. N-formimidoyl-L-glutamate is bound at residue tyrosine 142. Histidine 234 contacts Fe(3+). Histidine 234 is a Zn(2+) binding site. Glutamate 237 is a binding site for 4-imidazolone-5-propanoate. Aspartate 308 is a binding site for Fe(3+). Aspartate 308 is a Zn(2+) binding site.

It belongs to the metallo-dependent hydrolases superfamily. HutI family. Requires Zn(2+) as cofactor. Fe(3+) is required as a cofactor.

It is found in the cytoplasm. The enzyme catalyses 4-imidazolone-5-propanoate + H2O = N-formimidoyl-L-glutamate. It functions in the pathway amino-acid degradation; L-histidine degradation into L-glutamate; N-formimidoyl-L-glutamate from L-histidine: step 3/3. In terms of biological role, catalyzes the hydrolytic cleavage of the carbon-nitrogen bond in imidazolone-5-propanoate to yield N-formimidoyl-L-glutamate. It is the third step in the universal histidine degradation pathway. In Thermoplasma volcanium (strain ATCC 51530 / DSM 4299 / JCM 9571 / NBRC 15438 / GSS1), this protein is Imidazolonepropionase.